A 155-amino-acid chain; its full sequence is Transcriptional repressor NrdR (155 aa).

Residues 3–34 (CPFCAANDTKVIDSRLVAEGDQVRRRRECVAC) fold into a zinc finger. The ATP-cone domain maps to 49 to 139 (PRLIKQDGSR…VYRRFQDLNE (91 aa)).

It belongs to the NrdR family. Zn(2+) is required as a cofactor.

In terms of biological role, negatively regulates transcription of bacterial ribonucleotide reductase nrd genes and operons by binding to NrdR-boxes. This is Transcriptional repressor NrdR from Ectopseudomonas mendocina (strain ymp) (Pseudomonas mendocina).